The primary structure comprises 178 residues: Endothelin-2 (178 aa).

Residues 1–24 (MVAVPTAWCSVALALLLALQEGKG) form the signal peptide. Positions 25–46 (QVAAAPDHPAPSPRARGSHLRP) are excised as a propeptide. Cystine bridges form between C49–C63 and C51–C59. A propeptide spanning residues 70-178 (VNTPGQTAPY…RPMYPRRRKT (109 aa)) is cleaved from the precursor. The tract at residues 96–111 (CECSSSGDPACATFCH) is endothelin-like. Positions 158 to 178 (ARQHQEAEREPRPMYPRRRKT) are disordered. Basic and acidic residues predominate over residues 160–169 (QHQEAEREPR).

The protein belongs to the endothelin/sarafotoxin family.

Its subcellular location is the secreted. Functionally, endothelins are endothelium-derived vasoconstrictor peptides. This chain is Endothelin-2 (EDN2), found in Mustela putorius furo (European domestic ferret).